The following is a 241-amino-acid chain: Platelet-derived growth factor subunit B (241 aa).

Positions 1-20 (MNRCWALFLSLCCYLRLVSA) are cleaved as a signal peptide. Positions 21 to 81 (EGDPIPEELY…ELESLSRGRR (61 aa)) are cleaved as a propeptide — removed in mature form. A glycan (N-linked (GlcNAc...) asparagine) is linked at Asn-63. Cystine bridges form between Cys-97–Cys-141, Cys-130–Cys-178, and Cys-134–Cys-180. A propeptide spans 191 to 241 (TPGSSQEQRAARTPQTRVTIRTVRVRRPPKGKHRKFKHTHDKTALKETLGA) (removed in mature form). The segment covering 217–230 (RPPKGKHRKFKHTH) has biased composition (basic residues). Positions 217-241 (RPPKGKHRKFKHTHDKTALKETLGA) are disordered.

The protein belongs to the PDGF/VEGF growth factor family. In terms of assembly, antiparallel homodimer; disulfide-linked. Antiparallel heterodimer with PDGFA; disulfide-linked. The PDGFB homodimer interacts with PDGFRA and PDGFRB homodimers, and with heterodimers formed by PDGFRA and PDGFRB. The heterodimer composed of PDGFA and PDGFB interacts with PDGFRB homodimers, and with heterodimers formed by PDGFRA and PDGFRB. Interacts with XLKD1. Interacts with LRP1. Interacts with SORL1 (via the N-terminal ectodomain). Interacts with CD82; this interaction inhibits PDGFB-mediated signaling pathway.

It localises to the secreted. Functionally, growth factor that plays an essential role in the regulation of embryonic development, cell proliferation, cell migration, survival and chemotaxis. Potent mitogen for cells of mesenchymal origin. Required for normal proliferation and recruitment of pericytes and vascular smooth muscle cells in the central nervous system, skin, lung, heart and placenta. Required for normal blood vessel development, and for normal development of kidney glomeruli. Plays an important role in wound healing. Signaling is modulated by the formation of heterodimers with PDGFA. In Ovis aries (Sheep), this protein is Platelet-derived growth factor subunit B (PDGFB).